Reading from the N-terminus, the 490-residue chain is Bifunctional IPC transferase and DIPP synthase (490 aa).

Residues 72–290 form a mobA-like NTP transferase region; it reads LMKAVILAAG…RANRALVSAA (219 aa). CTP is bound by residues 78 to 80, K91, D144, and E180; that span reads LAA. E180 contributes to the Mg(2+) binding site. The interval 291–490 is CDP-alcohol phosphatidyltransferases; it reads VKGSGDGFIS…VTLLAVLVSK (200 aa). 4 consecutive transmembrane segments (helical) span residues 329 to 349, 389 to 409, 447 to 467, and 468 to 488; these read FLVG…AGLL, FLAI…FAIF, IFLI…IFWM, and FLFV…AVLV.

This sequence in the N-terminal section; belongs to the MobA family. The protein in the C-terminal section; belongs to the CDP-alcohol phosphatidyltransferase class-I family. Forms a mixture of monomers and dimers in solution, with prevalence of the monomeric form. Mg(2+) serves as cofactor.

The protein localises to the membrane. It carries out the reaction 1D-myo-inositol 3-phosphate + CTP + H(+) = CDP-1L-myo-inositol + diphosphate. The enzyme catalyses CDP-1L-myo-inositol + 1D-myo-inositol 3-phosphate = bis(1L-myo-inositol) 3,1'-phosphate 1-phosphate + CMP + H(+). Its function is as follows. Involved in biosynthesis of di-myo-inositol phosphate (DIP), a widespread organic solute in microorganisms adapted to hot environments. Catalyzes the condensation of CTP and L-myo-inositol-1-phosphate into CDP-L-myo-inositol, as well as the biosynthesis of di-myo-inositol-1,3'-phosphate-1'-phosphate (DIPP) from CDP-L-myo-inositol and L-myo-inositol-1-phosphate. The cytidylyltransferase is absolutely specific for CTP and L-myo-inositol-1-P. The DIPP synthase uses only L-myoinositol-1-phosphate as an alcohol acceptor, but CDP-glycerol, as well as CDP-L-myo-inositol and CDP-D-myoinositol, are recognized as alcohol donors. The protein is Bifunctional IPC transferase and DIPP synthase of Archaeoglobus fulgidus (strain ATCC 49558 / DSM 4304 / JCM 9628 / NBRC 100126 / VC-16).